The following is a 464-amino-acid chain: Kynurenine 3-monooxygenase (464 aa).

This sequence belongs to the aromatic-ring hydroxylase family. KMO subfamily. The cofactor is FAD.

The enzyme catalyses L-kynurenine + NADPH + O2 + H(+) = 3-hydroxy-L-kynurenine + NADP(+) + H2O. It functions in the pathway cofactor biosynthesis; NAD(+) biosynthesis; quinolinate from L-kynurenine: step 1/3. In terms of biological role, catalyzes the hydroxylation of L-kynurenine (L-Kyn) to form 3-hydroxy-L-kynurenine (L-3OHKyn). Required for synthesis of quinolinic acid. The sequence is that of Kynurenine 3-monooxygenase from Myxococcus xanthus (strain DK1622).